The chain runs to 238 residues: 2,3-bisphosphoglycerate-dependent phosphoglycerate mutase (238 aa).

Residues 8 to 15 (RHGQSEWN), 21 to 22 (TG), Arg-60, 86 to 89 (ERHY), Lys-97, 113 to 114 (RR), and 182 to 183 (GN) each bind substrate. The active-site Tele-phosphohistidine intermediate is His-9. Glu-86 acts as the Proton donor/acceptor in catalysis.

This sequence belongs to the phosphoglycerate mutase family. BPG-dependent PGAM subfamily. In terms of assembly, homodimer.

The catalysed reaction is (2R)-2-phosphoglycerate = (2R)-3-phosphoglycerate. Its pathway is carbohydrate degradation; glycolysis; pyruvate from D-glyceraldehyde 3-phosphate: step 3/5. Catalyzes the interconversion of 2-phosphoglycerate and 3-phosphoglycerate. The protein is 2,3-bisphosphoglycerate-dependent phosphoglycerate mutase of Pelagibacter ubique (strain HTCC1062).